The chain runs to 348 residues: Phospho-2-dehydro-3-deoxyheptonate aldolase, Trp-sensitive (348 aa).

It belongs to the class-I DAHP synthase family.

It carries out the reaction D-erythrose 4-phosphate + phosphoenolpyruvate + H2O = 7-phospho-2-dehydro-3-deoxy-D-arabino-heptonate + phosphate. It functions in the pathway metabolic intermediate biosynthesis; chorismate biosynthesis; chorismate from D-erythrose 4-phosphate and phosphoenolpyruvate: step 1/7. Its function is as follows. Stereospecific condensation of phosphoenolpyruvate (PEP) and D-erythrose-4-phosphate (E4P) giving rise to 3-deoxy-D-arabino-heptulosonate-7-phosphate (DAHP). The protein is Phospho-2-dehydro-3-deoxyheptonate aldolase, Trp-sensitive (aroH) of Escherichia coli O157:H7.